Consider the following 258-residue polypeptide: tRNA pseudouridine synthase A (258 aa).

The active-site Nucleophile is Asp52. Residue Tyr110 participates in substrate binding.

The protein belongs to the tRNA pseudouridine synthase TruA family. In terms of assembly, homodimer.

The catalysed reaction is uridine(38/39/40) in tRNA = pseudouridine(38/39/40) in tRNA. Functionally, formation of pseudouridine at positions 38, 39 and 40 in the anticodon stem and loop of transfer RNAs. The polypeptide is tRNA pseudouridine synthase A (Francisella tularensis subsp. novicida (strain U112)).